Reading from the N-terminus, the 392-residue chain is Small ribosomal subunit protein uS9m (392 aa).

Low complexity predominate over residues 8–25 (RSSRAMSSASPASASDSD). The segment at 8–27 (RSSRAMSSASPASASDSDTS) is disordered.

Belongs to the universal ribosomal protein uS9 family. In terms of assembly, component of the mitochondrial ribosome small subunit (28S) which comprises a 12S rRNA and about 30 distinct proteins.

The protein localises to the mitochondrion. This chain is Small ribosomal subunit protein uS9m (mrps-9), found in Caenorhabditis elegans.